The sequence spans 359 residues: Pyruvate dehydrogenase E1 component subunit beta, mitochondrial (359 aa).

The N-terminal 19 residues, 1 to 19, are a transit peptide targeting the mitochondrion; sequence MLGVIRNKTIRPSFSAFRF. A thiamine diphosphate-binding site is contributed by Glu-82. Residues Ile-135, Ala-183, Ile-184, and Asp-186 each coordinate K(+).

Tetramer of 2 alpha and 2 beta subunits. It depends on thiamine diphosphate as a cofactor.

Its subcellular location is the mitochondrion matrix. It carries out the reaction N(6)-[(R)-lipoyl]-L-lysyl-[protein] + pyruvate + H(+) = N(6)-[(R)-S(8)-acetyldihydrolipoyl]-L-lysyl-[protein] + CO2. Its function is as follows. The pyruvate dehydrogenase complex catalyzes the overall conversion of pyruvate to acetyl-CoA and CO(2). It contains multiple copies of three enzymatic components: pyruvate dehydrogenase (E1), dihydrolipoamide acetyltransferase (E2) and lipoamide dehydrogenase (E3). The polypeptide is Pyruvate dehydrogenase E1 component subunit beta, mitochondrial (Pisum sativum (Garden pea)).